We begin with the raw amino-acid sequence, 255 residues long: Small ribosomal subunit protein uS2 (255 aa).

The protein belongs to the universal ribosomal protein uS2 family.

This Streptococcus pyogenes serotype M28 (strain MGAS6180) protein is Small ribosomal subunit protein uS2.